The primary structure comprises 179 residues: Replication restart protein DnaT (179 aa).

The tract at residues 156–179 is disordered; it reads GGLPKRDVNTVSEPDSQIPPGFRG.

This sequence belongs to the DnaT family. Homooligomerizes. Interacts with PriB. Component of the replication restart primosome. Primosome assembly occurs via a 'hand-off' mechanism. PriA binds to replication forks, subsequently PriB then DnaT bind; DnaT then displaces ssDNA to generate the helicase loading substrate.

In terms of biological role, involved in the restart of stalled replication forks, which reloads the replicative helicase on sites other than the origin of replication. Can function in multiple replication restart pathways. Displaces ssDNA from a PriB-ssDNA complex. Probably forms a spiral filament on ssDNA. The polypeptide is Replication restart protein DnaT (Escherichia coli O7:K1 (strain IAI39 / ExPEC)).